A 472-amino-acid chain; its full sequence is Diaminopimelate decarboxylase (472 aa).

Residues 1-23 (MNVHTAGPRHAEKTRHTATPQRV) form a disordered region. At K97 the chain carries N6-(pyridoxal phosphate)lysine. Pyridoxal 5'-phosphate-binding positions include G283 and 325-328 (EPGR). R328, R369, and Y373 together coordinate substrate. C400 serves as the catalytic Proton donor. Substrate-binding residues include E401 and Y430. Y430 is a binding site for pyridoxal 5'-phosphate.

It belongs to the Orn/Lys/Arg decarboxylase class-II family. LysA subfamily. As to quaternary structure, homodimer. Pyridoxal 5'-phosphate serves as cofactor.

It catalyses the reaction meso-2,6-diaminopimelate + H(+) = L-lysine + CO2. It functions in the pathway amino-acid biosynthesis; L-lysine biosynthesis via DAP pathway; L-lysine from DL-2,6-diaminopimelate: step 1/1. Its function is as follows. Specifically catalyzes the decarboxylation of meso-diaminopimelate (meso-DAP) to L-lysine. In Mycobacterium leprae (strain TN), this protein is Diaminopimelate decarboxylase.